Reading from the N-terminus, the 70-residue chain is Cold shock-like protein CspF (70 aa).

The 61-residue stretch at 7–67 (GIVKTFDGKS…GLRGPSAANV (61 aa)) folds into the CSD domain.

Its subcellular location is the cytoplasm. The protein is Cold shock-like protein CspF (cspF) of Escherichia coli (strain K12).